Consider the following 546-residue polypeptide: Metal transporter Nramp6.2 (546 aa).

8 helical membrane-spanning segments follow: residues 50–70 (FLPY…PGNL), 83–103 (ELLW…SLAA), 128–150 (SLWL…GTAF), 154–176 (ILFH…LLLG), 187–207 (LLIS…LSYV), 233–253 (IALL…ALVL), 270–290 (YFLI…VSII), and 333–353 (IYAI…TYAG). N-linked (GlcNAc...) asparagine glycosylation is present at asparagine 371. 4 helical membrane passes run 374–394 (TRCI…SSGA), 397–417 (LIII…IPLL), 433–453 (IYII…NVYY), and 473–493 (VIIG…IIYL).

This sequence belongs to the NRAMP (TC 2.A.55) family.

Its subcellular location is the membrane. In terms of biological role, probable divalent metal transporter. This chain is Metal transporter Nramp6.2, found in Populus trichocarpa (Western balsam poplar).